The following is a 337-amino-acid chain: MVNVGINGFGRIGRIVFRNALLNPKIQVVAINDPFINLEYMVYMFKYDSVHGRFKGTVEAKDGKLWIQGKPVIVYGEKNPSDIKWGAAGRDYVVESTGVFTTVEKAEGHLKGGAKKVIISAPSADAPMFVMGCNLDQYDPKYTVISNASCTTNCLAPLTKVIHDKYGIIEGLMSTIHATTATQKTVDGPSNKDWRGGRAVVNNIIPSSTGAAKAVGKVIPSLNGKLTGLSFRVPTIDVSVIDLVVRLEKPASYEDIKKTVKEASEGAYKGIIEYTEEQVVSADFIGHHASSIFDAQAGIQLNPNFVKLIVWYDNEWGYSARVCDLLVFAAEQDAKQQ.

NAD(+) contacts are provided by residues 11–12, Asp-33, and Lys-78; that span reads RI. D-glyceraldehyde 3-phosphate-binding positions include 149-151, Thr-180, 209-210, and Arg-232; these read SCT and TG. The active-site Nucleophile is the Cys-150. Asn-314 contributes to the NAD(+) binding site.

The protein belongs to the glyceraldehyde-3-phosphate dehydrogenase family. In terms of assembly, homotetramer.

It localises to the cytoplasm. It catalyses the reaction D-glyceraldehyde 3-phosphate + phosphate + NAD(+) = (2R)-3-phospho-glyceroyl phosphate + NADH + H(+). It participates in carbohydrate degradation; glycolysis; pyruvate from D-glyceraldehyde 3-phosphate: step 1/5. This Lyophyllum shimeji (Hon-shimeji) protein is Glyceraldehyde-3-phosphate dehydrogenase (GPD).